The chain runs to 803 residues: Ubiquitin carboxyl-terminal hydrolase 45 (803 aa).

Positions M1–G34 are disordered. Residues L36–S153 form a UBP-type zinc finger. Zn(2+) contacts are provided by C38, H40, C62, C65, C85, C88, C93, H100, H104, H113, C126, and C129. Positions K192–L802 constitute a USP domain. C201 serves as the catalytic Nucleophile. A disordered region spans residues P394–G554. Basic and acidic residues predominate over residues S403 to L417. 2 stretches are compositionally biased toward polar residues: residues A419 to S440 and S469 to D480. Residues S502 to T531 are compositionally biased toward low complexity. The segment covering H532–L545 has biased composition (polar residues). The Proton acceptor role is filled by H739.

It belongs to the peptidase C19 family. In terms of tissue distribution, retina.

Its subcellular location is the photoreceptor inner segment. The protein resides in the cytoplasm. It is found in the nucleus. It catalyses the reaction Thiol-dependent hydrolysis of ester, thioester, amide, peptide and isopeptide bonds formed by the C-terminal Gly of ubiquitin (a 76-residue protein attached to proteins as an intracellular targeting signal).. Functionally, catalyzes the deubiquitination of SPDL1. Plays a role in the repair of UV-induced DNA damage via deubiquitination of ERCC1, promoting its recruitment to DNA damage sites. May be involved in the maintenance of photoreceptor function. May play a role in normal retinal development. This chain is Ubiquitin carboxyl-terminal hydrolase 45, found in Danio rerio (Zebrafish).